Consider the following 242-residue polypeptide: Biosynthetic peptidoglycan transglycosylase (242 aa).

The chain crosses the membrane as a helical span at residues 19-39 (LMVVLAVFWGGGIALFSVAPV).

This sequence belongs to the glycosyltransferase 51 family.

It localises to the cell inner membrane. It catalyses the reaction [GlcNAc-(1-&gt;4)-Mur2Ac(oyl-L-Ala-gamma-D-Glu-L-Lys-D-Ala-D-Ala)](n)-di-trans,octa-cis-undecaprenyl diphosphate + beta-D-GlcNAc-(1-&gt;4)-Mur2Ac(oyl-L-Ala-gamma-D-Glu-L-Lys-D-Ala-D-Ala)-di-trans,octa-cis-undecaprenyl diphosphate = [GlcNAc-(1-&gt;4)-Mur2Ac(oyl-L-Ala-gamma-D-Glu-L-Lys-D-Ala-D-Ala)](n+1)-di-trans,octa-cis-undecaprenyl diphosphate + di-trans,octa-cis-undecaprenyl diphosphate + H(+). The protein operates within cell wall biogenesis; peptidoglycan biosynthesis. Its function is as follows. Peptidoglycan polymerase that catalyzes glycan chain elongation from lipid-linked precursors. The polypeptide is Biosynthetic peptidoglycan transglycosylase (Escherichia coli (strain 55989 / EAEC)).